The primary structure comprises 116 residues: MRHQLRVPLLSKPADQRKALLRALTTQLIREGRITTTKARAKALRNEAERMISLAKEGTLSARRRALGYIYDKKLVHSLFEKAQERYGERNGGYTRIVRTVARKGDNAQMAIIELV.

It belongs to the bacterial ribosomal protein bL17 family. In terms of assembly, part of the 50S ribosomal subunit. Contacts protein L32.

The protein is Large ribosomal subunit protein bL17 of Prochlorococcus marinus subsp. pastoris (strain CCMP1986 / NIES-2087 / MED4).